Consider the following 193-residue polypeptide: CASP-like protein 1D1 (193 aa).

Residues 1 to 30 are Cytoplasmic-facing; it reads MASTDKHGDTEYRTSSSTPAPAGVDYFKFD. Residues 31-51 traverse the membrane as a helical segment; that stretch reads VILRFVLFAASLVAVVVIVTG. An N-linked (GlcNAc...) asparagine glycan is attached at Asn-52. Topologically, residues 52–73 are extracellular; the sequence is NQTEVILVPQPVPWPAKFRYTP. A helical membrane pass occupies residues 74–94; the sequence is AFVYFVAALSVTGLYSIITTL. At 95 to 108 the chain is on the cytoplasmic side; that stretch reads ASLFASNKPALKTK. A helical transmembrane segment spans residues 109–129; sequence LLPYFILWDALILGIIASATG. Over 130 to 161 the chain is Extracellular; that stretch reads TAGGVAYLGLKGNSHVVGWNKICHVYDKFCRH. The helical transmembrane segment at 162 to 182 threads the bilayer; that stretch reads VGASIAVALFGSIVTVLLIWL. The Cytoplasmic segment spans residues 183–193; that stretch reads SAYSIHSRVPK.

The protein belongs to the Casparian strip membrane proteins (CASP) family. Homodimer and heterodimers.

The protein resides in the cell membrane. The sequence is that of CASP-like protein 1D1 from Glycine max (Soybean).